The primary structure comprises 176 residues: Macro domain-containing protein LMOf2365_2748 (176 aa).

The 175-residue stretch at 1 to 175 folds into the Macro domain; it reads MEITVVKGDI…LYNKLINSEV (175 aa).

This sequence belongs to the MacroD-type family.

This is Macro domain-containing protein LMOf2365_2748 from Listeria monocytogenes serotype 4b (strain F2365).